The primary structure comprises 225 residues: DNA-binding response regulator MtrA (225 aa).

In terms of domain architecture, Response regulatory spans 4–117; that stretch reads RILVVDDDAS…ELVARVRARL (114 aa). A 4-aspartylphosphate modification is found at D53. The segment at residues 125 to 224 is a DNA-binding region (ompR/PhoB-type); the sequence is AEMLSIADVE…VRGVGYKAGP (100 aa).

Post-translationally, phosphorylated by MtrB.

Member of the two-component regulatory system MtrA/MtrB. The chain is DNA-binding response regulator MtrA (mtrA) from Mycolicibacterium paratuberculosis (strain ATCC BAA-968 / K-10) (Mycobacterium paratuberculosis).